The following is a 467-amino-acid chain: Methylenetetrahydrofolate--tRNA-(uracil-5-)-methyltransferase TrmFO (467 aa).

11–16 (GAGLAG) is a binding site for FAD.

The protein belongs to the MnmG family. TrmFO subfamily. FAD serves as cofactor.

It is found in the cytoplasm. The enzyme catalyses uridine(54) in tRNA + (6R)-5,10-methylene-5,6,7,8-tetrahydrofolate + NADH + H(+) = 5-methyluridine(54) in tRNA + (6S)-5,6,7,8-tetrahydrofolate + NAD(+). The catalysed reaction is uridine(54) in tRNA + (6R)-5,10-methylene-5,6,7,8-tetrahydrofolate + NADPH + H(+) = 5-methyluridine(54) in tRNA + (6S)-5,6,7,8-tetrahydrofolate + NADP(+). Catalyzes the folate-dependent formation of 5-methyl-uridine at position 54 (M-5-U54) in all tRNAs. The protein is Methylenetetrahydrofolate--tRNA-(uracil-5-)-methyltransferase TrmFO of Prochlorococcus marinus (strain NATL2A).